Consider the following 379-residue polypeptide: AT-rich binding protein (379 aa).

The segment at 29–52 (IVCHTCQEELQTQDQFWKHIQDEH) adopts a C2H2-type 1 zinc-finger fold. The span at 114 to 124 (EQREVELHEAH) shows a compositional bias: basic and acidic residues. Disordered regions lie at residues 114 to 148 (EQREVELHEAHQQQQQQQQQQLHQQQQQQQRDAAK) and 221 to 267 (PTAS…STTL). 3 stretches are compositionally biased toward low complexity: residues 125-143 (QQQQQQQQQQLHQQQQQQQ), 223-242 (ASFVSASGGSTSTTVSTTPP), and 249-262 (QQQQHQQQQQQQQQ). C2H2-type zinc fingers lie at residues 312 to 336 (YICDYESCGLKFKYKSRMELHRVVH) and 342 to 365 (FNCDLCSASFKQSCNLSTHRKKKH).

The protein resides in the nucleus. Its function is as follows. May be a transcription factor for genes having (A+T) stretches in their promoter and/or enhancer regions. Binds to AT rich DNA. The protein is AT-rich binding protein of Drosophila willistoni (Fruit fly).